Consider the following 534-residue polypeptide: Nitrate/nitrite transporter NrtP (534 aa).

A run of 12 helical transmembrane segments spans residues 19 to 39 (WFAF…ATTI), 52 to 72 (TIGL…GMLL), 79 to 99 (LTYS…ATAQ), 109 to 129 (LLMG…AEWF), 150 to 170 (AFSA…PGAF), 195 to 215 (AAIA…YFSV), 240 to 260 (DFWF…VLAW), 266 to 286 (NFLN…LYLF), 382 to 404 (WTMV…VAGT), 409 to 431 (IAVL…TFAI), 445 to 465 (GNVG…LLLL), and 485 to 505 (GFFQ…AFFL).

Belongs to the major facilitator superfamily. Nitrate/nitrite porter (TC 2.A.1.8) family.

It localises to the cell inner membrane. In terms of biological role, high-efficiency transport system for both nitrate and nitrite. This chain is Nitrate/nitrite transporter NrtP, found in Picosynechococcus sp. (strain ATCC 27264 / PCC 7002 / PR-6) (Agmenellum quadruplicatum).